We begin with the raw amino-acid sequence, 689 residues long: MFERNQKTIFVLDHTRYFSIASEEYISMDFLKGKPSADGGATGAAGNATGGGGSQFSKSLWTCACESSIEYCRVVWDLFPGKKHVRFIVSDTAAHIVNTWSHSTQNMSHVMNAMVMVGVPSRNVATSSDYSVIHGLRAAIEALAEPTDEQLAAMADLGTDELPRIPNKGRVICITSARDNTSMKSLEDIFNTVLVQQNALAAPPAKKGLVIDHCHLVILNIVPLGVESLVTNRSLLKISPLLDVEIHTVSAPDISYKLTHLILNHYDLASTTVTNIPMKEEQNANSSANYDVEILHSRRAHSITCGPDFSLPTSIKQGATYETVTLKWCTPRGCGSADLQPCLGQFLVTPVDVTSRPSSCLINFLLNGRSVLLEMPRKTGSKATSHMLSARGGEIFVHSLCITRSCMDEAPSITDGPGGRVSDYRTAELGQLIKMSRMVPLKVKDPSAPPLARRLPRYFPLTTSSSILFHLQRHINWLPHFLHILVKEDMDKQDEVRCQQHIHELYKSASRGDVLPFTHTNGARLKLSKAKDQYRLLYRELEQLIQLNATTMHHKNLLESLQSLRAAYGDAPLKSEPGASLLRSYTESPLSPERLEPITSGSASGSSNSNSLLKASKRRMSSCGQRSLLDIISSAERSQSNKRLDFSGRLCTPLGQVAKLYPDFGNKDKDSVVTAASITPNVKEESVRS.

A coiled-coil region spans residues 521-550 (NGARLKLSKAKDQYRLLYRELEQLIQLNAT). The segment at 578 to 619 (GASLLRSYTESPLSPERLEPITSGSASGSSNSNSLLKASKRR) is disordered. Over residues 600–614 (SGSASGSSNSNSLLK) the composition is skewed to low complexity. The Nuclear localization signal (NLS) signature appears at 613–619 (LKASKRR).

The protein belongs to the Integrator subunit 13 family. Belongs to the multiprotein complex Integrator, at least composed of IntS1, IntS2, IntS3, IntS4, omd/IntS5, IntS6, defl/IntS7, IntS8, IntS9, IntS10, IntS11, IntS12, asun/IntS13, IntS14 and IntS15. The core complex associates with protein phosphatase 2A subunits mts/PP2A and Pp2A-29B, to form the Integrator-PP2A (INTAC) complex. Phosphorylated.

It is found in the nucleus. Its subcellular location is the cytoplasm. It localises to the perinuclear region. Functionally, component of the integrator complex, a multiprotein complex that terminates RNA polymerase II (Pol II) transcription in the promoter-proximal region of genes. The integrator complex provides a quality checkpoint during transcription elongation by driving premature transcription termination of transcripts that are unfavorably configured for transcriptional elongation: the complex terminates transcription by (1) catalyzing dephosphorylation of the C-terminal domain (CTD) of Pol II subunit Polr2A/Rbp1 and Spt5, and (2) degrading the exiting nascent RNA transcript via endonuclease activity. The integrator complex is also involved in the 3'-end processing of the U7 snRNA, and also the spliceosomal snRNAs U1, U2, U4 and U5. This chain is Protein asunder (asun), found in Drosophila erecta (Fruit fly).